The primary structure comprises 178 residues: CDP-archaeol synthase (178 aa).

The next 5 membrane-spanning stretches (helical) occupy residues 3-23 (LLLL…ANAV), 56-76 (FFGI…VILY), 91-111 (IILG…GSFI), 123-143 (APLL…YPLY), and 149-169 (LMVI…IIAY).

Belongs to the CDP-archaeol synthase family. Mg(2+) serves as cofactor.

It localises to the cell membrane. It catalyses the reaction 2,3-bis-O-(geranylgeranyl)-sn-glycerol 1-phosphate + CTP + H(+) = CDP-2,3-bis-O-(geranylgeranyl)-sn-glycerol + diphosphate. It participates in membrane lipid metabolism; glycerophospholipid metabolism. Its function is as follows. Catalyzes the formation of CDP-2,3-bis-(O-geranylgeranyl)-sn-glycerol (CDP-archaeol) from 2,3-bis-(O-geranylgeranyl)-sn-glycerol 1-phosphate (DGGGP) and CTP. This reaction is the third ether-bond-formation step in the biosynthesis of archaeal membrane lipids. The protein is CDP-archaeol synthase of Methanococcus maripaludis (strain C7 / ATCC BAA-1331).